Here is a 286-residue protein sequence, read N- to C-terminus: Acetyl-coenzyme A carboxylase carboxyl transferase subunit beta (286 aa).

Residues 27-286 (LMTKCPKCKL…HSEETNHATI (260 aa)) enclose the CoA carboxyltransferase N-terminal domain. Zn(2+) is bound by residues Cys31, Cys34, Cys50, and Cys52. A C4-type zinc finger spans residues 31 to 52 (CPKCKLIQYTKQLEANLKVCVC).

The protein belongs to the AccD/PCCB family. In terms of assembly, acetyl-CoA carboxylase is a heterohexamer composed of biotin carboxyl carrier protein (AccB), biotin carboxylase (AccC) and two subunits each of ACCase subunit alpha (AccA) and ACCase subunit beta (AccD). Zn(2+) serves as cofactor.

It localises to the cytoplasm. The enzyme catalyses N(6)-carboxybiotinyl-L-lysyl-[protein] + acetyl-CoA = N(6)-biotinyl-L-lysyl-[protein] + malonyl-CoA. The protein operates within lipid metabolism; malonyl-CoA biosynthesis; malonyl-CoA from acetyl-CoA: step 1/1. Its function is as follows. Component of the acetyl coenzyme A carboxylase (ACC) complex. Biotin carboxylase (BC) catalyzes the carboxylation of biotin on its carrier protein (BCCP) and then the CO(2) group is transferred by the transcarboxylase to acetyl-CoA to form malonyl-CoA. This chain is Acetyl-coenzyme A carboxylase carboxyl transferase subunit beta, found in Exiguobacterium sibiricum (strain DSM 17290 / CCUG 55495 / CIP 109462 / JCM 13490 / 255-15).